Here is a 362-residue protein sequence, read N- to C-terminus: Isopentenyl-diphosphate delta-isomerase (362 aa).

6 to 7 lines the substrate pocket; it reads RK. FMN contacts are provided by residues 65 to 67, Ser-95, and Asn-124; that span reads SIT. 95–97 contributes to the substrate binding site; sequence SQR. Residue Gln-158 coordinates substrate. Glu-159 is a Mg(2+) binding site. Residues Lys-189, Thr-219, 269–271, and 290–291 each bind FMN; these read GVR and AL.

Belongs to the IPP isomerase type 2 family. As to quaternary structure, homooctamer. Dimer of tetramers. FMN serves as cofactor. The cofactor is NADPH. Requires Mg(2+) as cofactor.

It localises to the cytoplasm. The enzyme catalyses isopentenyl diphosphate = dimethylallyl diphosphate. Functionally, involved in the biosynthesis of isoprenoids. Catalyzes the 1,3-allylic rearrangement of the homoallylic substrate isopentenyl (IPP) to its allylic isomer, dimethylallyl diphosphate (DMAPP). The polypeptide is Isopentenyl-diphosphate delta-isomerase (Methanococcoides burtonii (strain DSM 6242 / NBRC 107633 / OCM 468 / ACE-M)).